We begin with the raw amino-acid sequence, 465 residues long: Ribulose bisphosphate carboxylase large chain (465 aa).

Lys-4 is modified (N6,N6,N6-trimethyllysine). Substrate-binding residues include Asn-113 and Thr-163. Lys-165 functions as the Proton acceptor in the catalytic mechanism. A substrate-binding site is contributed by Lys-167. Mg(2+) contacts are provided by Lys-191, Asp-193, and Glu-194. Lys-191 carries the post-translational modification N6-carboxylysine. Catalysis depends on His-284, which acts as the Proton acceptor. 3 residues coordinate substrate: Arg-285, His-317, and Ser-369.

The protein belongs to the RuBisCO large chain family. Type I subfamily. As to quaternary structure, heterohexadecamer of 8 large chains and 8 small chains; disulfide-linked. The disulfide link is formed within the large subunit homodimers. Mg(2+) is required as a cofactor. The disulfide bond which can form in the large chain dimeric partners within the hexadecamer appears to be associated with oxidative stress and protein turnover.

It is found in the plastid. The protein resides in the chloroplast. It carries out the reaction 2 (2R)-3-phosphoglycerate + 2 H(+) = D-ribulose 1,5-bisphosphate + CO2 + H2O. It catalyses the reaction D-ribulose 1,5-bisphosphate + O2 = 2-phosphoglycolate + (2R)-3-phosphoglycerate + 2 H(+). Its function is as follows. RuBisCO catalyzes two reactions: the carboxylation of D-ribulose 1,5-bisphosphate, the primary event in carbon dioxide fixation, as well as the oxidative fragmentation of the pentose substrate in the photorespiration process. Both reactions occur simultaneously and in competition at the same active site. In Nepenthes alata (Winged pitcher plant), this protein is Ribulose bisphosphate carboxylase large chain.